Reading from the N-terminus, the 552-residue chain is 4-coumarate--CoA ligase-like 3 (552 aa).

ATP is bound by residues Ser207, Ser208, Gly209, Thr210, Thr211, and Lys215. Residue Phe252 coordinates (E)-4-coumaroyl-AMP. Arg273 serves as a coordination point for CoA. The interval 275-346 (GLDDMMQAVE…EKYPTVNIFQ (72 aa)) is SBD1. The (E)-4-coumaroyl-AMP site is built by Gly324, Gln346, Gly347, and Thr351. ATP is bound by residues Gln346, Gly347, Thr351, Asp432, and Arg447. The interval 347–411 (GYALTESHGS…LKGPSISKGY (65 aa)) is SBD2. (E)-4-coumaroyl-AMP contacts are provided by Lys449 and Lys453. CoA is bound by residues Lys455 and Gly456. Lys538 lines the ATP pocket. A Microbody targeting signal motif is present at residues 550–552 (SKL).

This sequence belongs to the ATP-dependent AMP-binding enzyme family. It depends on Mg(2+) as a cofactor.

It localises to the peroxisome. It catalyses the reaction (E)-4-coumarate + ATP + CoA = (E)-4-coumaroyl-CoA + AMP + diphosphate. It carries out the reaction (E)-4-coumarate + ATP + H(+) = (E)-4-coumaroyl-AMP + diphosphate. The catalysed reaction is (E)-4-coumaroyl-AMP + CoA = (E)-4-coumaroyl-CoA + AMP + H(+). In terms of biological role, carboxylate--CoA ligase that may use 4-coumarate as substrate. Follows a two-step reaction mechanism, wherein the carboxylate substrate first undergoes adenylation by ATP, followed by a thioesterification in the presence of CoA to yield the final CoA thioester. In Arabidopsis thaliana (Mouse-ear cress), this protein is 4-coumarate--CoA ligase-like 3.